The primary structure comprises 427 residues: Glutamate-1-semialdehyde 2,1-aminomutase (427 aa).

K265 carries the N6-(pyridoxal phosphate)lysine modification.

It belongs to the class-III pyridoxal-phosphate-dependent aminotransferase family. HemL subfamily. Homodimer. It depends on pyridoxal 5'-phosphate as a cofactor.

It is found in the cytoplasm. It carries out the reaction (S)-4-amino-5-oxopentanoate = 5-aminolevulinate. Its pathway is porphyrin-containing compound metabolism; protoporphyrin-IX biosynthesis; 5-aminolevulinate from L-glutamyl-tRNA(Glu): step 2/2. This Pseudomonas entomophila (strain L48) protein is Glutamate-1-semialdehyde 2,1-aminomutase.